The chain runs to 329 residues: Aspartate carbamoyltransferase catalytic subunit (329 aa).

Residues Arg63 and Thr64 each coordinate carbamoyl phosphate. Residue Lys91 coordinates L-aspartate. Carbamoyl phosphate is bound by residues Arg113, His141, and Gln144. Residues Arg179 and Arg234 each contribute to the L-aspartate site. Gly275 and Pro276 together coordinate carbamoyl phosphate.

The protein belongs to the aspartate/ornithine carbamoyltransferase superfamily. ATCase family. In terms of assembly, heterododecamer (2C3:3R2) of six catalytic PyrB chains organized as two trimers (C3), and six regulatory PyrI chains organized as three dimers (R2).

It carries out the reaction carbamoyl phosphate + L-aspartate = N-carbamoyl-L-aspartate + phosphate + H(+). It participates in pyrimidine metabolism; UMP biosynthesis via de novo pathway; (S)-dihydroorotate from bicarbonate: step 2/3. Catalyzes the condensation of carbamoyl phosphate and aspartate to form carbamoyl aspartate and inorganic phosphate, the committed step in the de novo pyrimidine nucleotide biosynthesis pathway. This chain is Aspartate carbamoyltransferase catalytic subunit, found in Magnetococcus marinus (strain ATCC BAA-1437 / JCM 17883 / MC-1).